A 399-amino-acid polypeptide reads, in one-letter code: Acetate kinase (399 aa).

N10 contacts Mg(2+). Residue K17 participates in ATP binding. Position 91 (R91) interacts with substrate. The Proton donor/acceptor role is filled by D148. ATP contacts are provided by residues H208 to G212, D283 to R285, and G331 to N335. E385 lines the Mg(2+) pocket.

The protein belongs to the acetokinase family. As to quaternary structure, homodimer. It depends on Mg(2+) as a cofactor. Mn(2+) is required as a cofactor.

The protein localises to the cytoplasm. It carries out the reaction acetate + ATP = acetyl phosphate + ADP. The protein operates within metabolic intermediate biosynthesis; acetyl-CoA biosynthesis; acetyl-CoA from acetate: step 1/2. Functionally, catalyzes the formation of acetyl phosphate from acetate and ATP. Can also catalyze the reverse reaction. This chain is Acetate kinase, found in Shewanella sp. (strain ANA-3).